We begin with the raw amino-acid sequence, 96 residues long: Large ribosomal subunit protein bL28 (96 aa).

Residues 1–24 (MSRSCELTGKGVQSGHNVSHANNK) are disordered.

It belongs to the bacterial ribosomal protein bL28 family.

The polypeptide is Large ribosomal subunit protein bL28 (Sinorhizobium fredii (strain NBRC 101917 / NGR234)).